The sequence spans 266 residues: Putative expansin-A30 (266 aa).

The signal sequence occupies residues 1–24; it reads MAAASSTTATTAILAAVIISLAGA. In terms of domain architecture, Expansin-like EG45 spans 55–170; that stretch reads GGACGYGNLY…RRVPCARAGG (116 aa). An Expansin-like CBD domain is found at 180-261; the sequence is YWLLAYVMNV…SWCFGLTYQA (82 aa).

Belongs to the expansin family. Expansin A subfamily.

It is found in the secreted. Its subcellular location is the cell wall. The protein localises to the membrane. May cause loosening and extension of plant cell walls by disrupting non-covalent bonding between cellulose microfibrils and matrix glucans. No enzymatic activity has been found. May be required for rapid internodal elongation in deepwater rice during submergence. In Oryza sativa subsp. japonica (Rice), this protein is Putative expansin-A30 (EXPA30).